The sequence spans 298 residues: N-acetylmuramic acid 6-phosphate etherase (298 aa).

The SIS domain maps to 55–218 (IHAQVSGGGR…STGLMIKSGK (164 aa)). The active-site Proton donor is Glu83. Residue Glu114 is part of the active site.

This sequence belongs to the GCKR-like family. MurNAc-6-P etherase subfamily. In terms of assembly, homodimer.

It carries out the reaction N-acetyl-D-muramate 6-phosphate + H2O = N-acetyl-D-glucosamine 6-phosphate + (R)-lactate. It participates in amino-sugar metabolism; 1,6-anhydro-N-acetylmuramate degradation. The protein operates within amino-sugar metabolism; N-acetylmuramate degradation. Its pathway is cell wall biogenesis; peptidoglycan recycling. Functionally, specifically catalyzes the cleavage of the D-lactyl ether substituent of MurNAc 6-phosphate, producing GlcNAc 6-phosphate and D-lactate. Together with AnmK, is also required for the utilization of anhydro-N-acetylmuramic acid (anhMurNAc) either imported from the medium or derived from its own cell wall murein, and thus plays a role in cell wall recycling. This is N-acetylmuramic acid 6-phosphate etherase from Shigella boydii serotype 18 (strain CDC 3083-94 / BS512).